Consider the following 192-residue polypeptide: Peptidyl-tRNA hydrolase (192 aa).

Residue Tyr-18 coordinates tRNA. The Proton acceptor role is filled by His-23. Residues Phe-69, Asn-71, and Asn-117 each contribute to the tRNA site.

This sequence belongs to the PTH family. In terms of assembly, monomer.

The protein resides in the cytoplasm. The enzyme catalyses an N-acyl-L-alpha-aminoacyl-tRNA + H2O = an N-acyl-L-amino acid + a tRNA + H(+). Hydrolyzes ribosome-free peptidyl-tRNAs (with 1 or more amino acids incorporated), which drop off the ribosome during protein synthesis, or as a result of ribosome stalling. Its function is as follows. Catalyzes the release of premature peptidyl moieties from peptidyl-tRNA molecules trapped in stalled 50S ribosomal subunits, and thus maintains levels of free tRNAs and 50S ribosomes. The polypeptide is Peptidyl-tRNA hydrolase (Neisseria meningitidis serogroup B (strain ATCC BAA-335 / MC58)).